A 322-amino-acid chain; its full sequence is Heterogeneous nuclear ribonucleoprotein D-like (322 aa).

The segment at 1 to 36 (MTGTARSALPLPQSPARALRPSGAARAAPSLSPSRF) is disordered. An Omega-N-methylarginine modification is found at arginine 6. Over residues 14–36 (SPARALRPSGAARAAPSLSPSRF) the composition is skewed to low complexity. 2 consecutive RRM domains span residues 51–133 (NKMF…KGKE) and 136–215 (KKVF…QPKE). Lysine 64 is modified (N6-methyllysine). A Glycyl lysine isopeptide (Lys-Gly) (interchain with G-Cter in SUMO2) cross-link involves residue lysine 112. Lysine 119 carries the N6-acetyllysine modification. Serine 144 bears the Phosphoserine mark. Disordered stretches follow at residues 216 to 251 (VYRQ…NWNQ) and 299 to 322 (SGQQ…YQPY). Gly residues predominate over residues 226–245 (GGRGAAAGGRGGARGRGRGQ). Positions 245–322 (QGQNWNQGFN…GNHQNNYQPY (78 aa)) are necessary for interaction with TNPO1. The residue at position 310 (arginine 310) is a Dimethylated arginine; alternate. Arginine 310 carries the omega-N-methylarginine; alternate modification.

Interacts with TNPO1 and ZNF148. In terms of processing, dimethylation of Arg-310 is probably of the asymmetric type.

It is found in the nucleus. Its subcellular location is the cytoplasm. Acts as a transcriptional regulator. Promotes transcription repression. Promotes transcription activation in differentiated myotubes. Binds to double- and single-stranded DNA sequences. Binds to the transcription suppressor CATR sequence of the COX5B promoter. Binds with high affinity to RNA molecules that contain AU-rich elements (AREs) found within the 3'-UTR of many proto-oncogenes and cytokine mRNAs. Binds both to nuclear and cytoplasmic poly(A) mRNAs. Binds to poly(G) and poly(A), but not to poly(U) or poly(C) RNA homopolymers. Binds to the 5'-ACUAGC-3' RNA consensus sequence. This Rattus norvegicus (Rat) protein is Heterogeneous nuclear ribonucleoprotein D-like (Hnrnpdl).